A 66-amino-acid polypeptide reads, in one-letter code: Panusin (66 aa).

The signal sequence occupies residues 1–22; that stretch reads MKTKAVLMLMLLVLVAATLVQG. A propeptide spanning residues 23–26 is cleaved from the precursor; the sequence is EPEP. Disulfide bonds link C32–C54, C39–C61, and C44–C60. A Tyrosine amide modification is found at Y65.

In terms of assembly, forms dimers and higher-order oligomers. Contains 3 disulfide bonds.

Antimicrobial peptide. Has antibacterial activity against Gram-positive bacteria S.aureus ATCC 29737 and B.subtilis ATCC 6633 as well as against Gram-negative bacteria E.coli ATCC 10536 and K.pneumoniae ATCC 10031. The sequence is that of Panusin from Panulirus argus (Caribbean spiny lobster).